Reading from the N-terminus, the 454-residue chain is Cell division cycle-associated 7-like protein (454 aa).

Residues 9 to 33 (IPKEVADIFNAPSDDEEFVGFRDDV) carry the Integrase domain-binding motif 1 (IBM1) motif. Ser-21 is subject to Phosphoserine. An Integrase domain-binding motif 2 (IBM2) motif is present at residues 65–91 (FTEELRRIFIEDTDSETEDFAGFTQSD). At Thr-77 the chain carries Phosphothreonine. Position 79 is a phosphoserine (Ser-79). Phosphothreonine is present on residues Thr-81 and Thr-88. Disordered stretches follow at residues 103–169 (VESD…LFSS) and 188–213 (QVIQ…SSDA). A phosphoserine mark is found at Ser-105, Ser-108, Ser-117, Ser-138, Ser-139, Ser-162, Ser-195, and Ser-197. Residues 117–126 (SEEEEDEEED) are compositionally biased toward acidic residues. An MYC-binding region spans residues 213-235 (ALLKRTMNIKENKAMLAQLLAEL). Residues Lys-222 and Lys-225 each participate in a glycyl lysine isopeptide (Lys-Gly) (interchain with G-Cter in SUMO2) cross-link. Ser-261 is modified (phosphoserine).

In terms of assembly, interacts with MYC. Interacts (via IBM motifs) with PSIP1 (via IBD domain); phosphorylation increases its affinity for PSIP1. In terms of processing, phosphorylation increases its interaction with PSIP1. Ubiquitous. Overexpressed in medulloblastoma.

The protein resides in the cytoplasm. Its subcellular location is the nucleus. Functionally, plays a role in transcriptional regulation as a repressor that inhibits monoamine oxidase A (MAOA) activity and gene expression by binding to the promoter. Plays an important oncogenic role in mediating the full transforming effect of MYC in medulloblastoma cells. Involved in apoptotic signaling pathways; May act downstream of P38-kinase and BCL-2, but upstream of CASP3/caspase-3 as well as CCND1/cyclin D1 and E2F1. The polypeptide is Cell division cycle-associated 7-like protein (CDCA7L) (Homo sapiens (Human)).